We begin with the raw amino-acid sequence, 156 residues long: 6,7-dimethyl-8-ribityllumazine synthase (156 aa).

5-amino-6-(D-ribitylamino)uracil is bound by residues F23, S57–E59, and A81–V83. A (2S)-2-hydroxy-3-oxobutyl phosphate-binding site is contributed by E86–T87. The active-site Proton donor is the H89. F114 contributes to the 5-amino-6-(D-ribitylamino)uracil binding site. Residue R128 coordinates (2S)-2-hydroxy-3-oxobutyl phosphate.

This sequence belongs to the DMRL synthase family.

The catalysed reaction is (2S)-2-hydroxy-3-oxobutyl phosphate + 5-amino-6-(D-ribitylamino)uracil = 6,7-dimethyl-8-(1-D-ribityl)lumazine + phosphate + 2 H2O + H(+). It participates in cofactor biosynthesis; riboflavin biosynthesis; riboflavin from 2-hydroxy-3-oxobutyl phosphate and 5-amino-6-(D-ribitylamino)uracil: step 1/2. Its function is as follows. Catalyzes the formation of 6,7-dimethyl-8-ribityllumazine by condensation of 5-amino-6-(D-ribitylamino)uracil with 3,4-dihydroxy-2-butanone 4-phosphate. This is the penultimate step in the biosynthesis of riboflavin. The chain is 6,7-dimethyl-8-ribityllumazine synthase from Salinibacter ruber (strain DSM 13855 / M31).